We begin with the raw amino-acid sequence, 394 residues long: Histidinol dehydrogenase (394 aa).

Tyr-113, Gln-172, and Asn-195 together coordinate NAD(+). The substrate site is built by Thr-218, Gln-240, and His-243. 2 residues coordinate Zn(2+): Gln-240 and His-243. Active-site proton acceptor residues include Glu-294 and His-295. Positions 295, 327, 380, and 385 each coordinate substrate. Residue Asp-327 participates in Zn(2+) binding. Zn(2+) is bound at residue His-385.

This sequence belongs to the histidinol dehydrogenase family. It depends on Zn(2+) as a cofactor.

It catalyses the reaction L-histidinol + 2 NAD(+) + H2O = L-histidine + 2 NADH + 3 H(+). It functions in the pathway amino-acid biosynthesis; L-histidine biosynthesis; L-histidine from 5-phospho-alpha-D-ribose 1-diphosphate: step 9/9. In terms of biological role, catalyzes the sequential NAD-dependent oxidations of L-histidinol to L-histidinaldehyde and then to L-histidine. The sequence is that of Histidinol dehydrogenase from Sulfurisphaera tokodaii (strain DSM 16993 / JCM 10545 / NBRC 100140 / 7) (Sulfolobus tokodaii).